Consider the following 1391-residue polypeptide: MSMLKPSGLKAPTKILKPGSTALKTPAAAAAPVEKTIPSEKASGPPSSETQEEFVDDFRVGERVWVNGNKPGFIQFLGETQFAPGQWAGIVLDEPIGKNDGSVAGVRYFQCEPLKGIFTRPSKLTRKVQAEDEANGLQAAPGRTASPLSTAAATMVSSSPATPSNIPHKPSQSTAKEPSATPQISNLTKTASESISNLSEAGSVKKGERELKVGDRVLVGGTKAGVVRFLGETDFAKGEWCGVELDEPLGKNDGAVAGTRYFQCQPKYGLFAPVHKVTKIGFPSTTPAKAKAAAVRRVMAATPASLKRSPSASSLSSMSSVASSVSSKPSRTGLLTETSSRYARKISGTTALQEALKEKQQHIEQLLAERDLERAEVAKATSHVGEIEQELALARDGHDQHVLELEAKMDQLRTMVEAADREKVELLNQLEEEKRKVEDLQFRVEEESITKGDLEVATVSEKSRIMELEKDLALRAQEVAELRRRLESSKPPGDVDMSLSLLQEISALQEKLEAIHTDHQGEMTSLKEHFGAREEAFQKEIKALHTATEKLSKENESLRSKLDHANKENSDVIALWKSKLETAIASHQQAMEELKVSFSKGIGTDSAEFAELKTQIERLRLDYQHEIESLQSKQDSERSAHAKEMETMQAKLMKIIKEKEDSLEAVKARLDSAEDQHLVEMEDTLNKLQEAEIKVKELEVLQAKYTEQSEVIGNFTSQLSAVKEKLLDLDALRKANSEGKLELETLRQQLEGAEKQIKNLETERNAESSKANSITKELQEKELVLTGLQDSLNQVNQVKETLEKELQTLKEKFASTSEEAVSAQTRMQDTVNKLHQKEEQFNVLSSELEKLRENLTDMEAKFKEKDDREDQLVKAKEKLENDIAEIMKMSGDNSSQLTKMNDELRLKERSVEELQLKLTKANENASFLQKSIGEVTLKAEQSQQQAARKHEEEKKELEEKLLELEKKMETSYNQCQDLKAKYEKASSETKTKHEEILQNLQKMLADTEDKLKAAQEANRDLMQDMEELKTQADKAKAAQTAEDAMQIMEQMTKEKTETLASLEDTKQTNARLQNELDTLKENNLKTVEELNKSKELLSVENQKMEEFKKEIETLKQAAAQKSQQLSALQEENVKLAEELGRTRDEVTSHQKLEEERSVLNNQLLEMKKRESEFRKDADEEKASLQKSISLTSALLTEKDAELEKLRNEVTVLRGENATAKSLHSVVQTLESDKVKLELKVKNLELQLKENKRQLSSSSGNTDAQAEEDERAQESQIDFLNSVIVDLQRKNQDLKMKVEMMSEAALNGNGEDLNSYDSDDQEKQSKKKPRLFCDICDCFDLHDTEDCPTQAQMSEDPPHSTHHGSRSEERPYCEICEMFGHWATNCNDDETF.

The interval Met-1–Glu-53 is disordered. Ser-48 carries the phosphoserine modification. Phosphothreonine is present on Thr-50. Positions Gly-78–Arg-120 constitute a CAP-Gly 1 domain. The important for tubulin binding stretch occupies residues Gly-97–Gly-101. A disordered region spans residues Gln-129–Pro-182. Ser-146 bears the Phosphoserine mark. The span at Ser-146–Pro-182 shows a compositional bias: polar residues. Phosphothreonine is present on Thr-181. 4 positions are modified to phosphoserine: Ser-194, Ser-196, Ser-199, and Ser-203. The region spanning Gly-231–Pro-273 is the CAP-Gly 2 domain. The segment covering Thr-302 to Arg-331 has biased composition (low complexity). The tract at residues Thr-302–Thr-336 is disordered. Phosphoserine is present on Ser-309. Ser-311 is modified (phosphoserine; by PKA). Phosphoserine is present on residues Ser-314, Ser-347, and Ser-1189. A coiled-coil region spans residues Thr-349–Asn-1306. Residues Lys-1251–Gln-1272 form a disordered region. Residue Ser-1317 is modified to Phosphoserine. A CCHC-type zinc finger spans residues Pro-1370–Asp-1387.

Interacts with MTOR; phosphorylates and regulates CLIP1. Interacts (via CAP-Gly domains) with tubulin. Interacts with SLAIN2. Interacts with TUBA1B, MAPRE1 and MAPRE3. Interacts (via zinc finger) with DCTN1. Binds preferentially to tyrosinated microtubules, and only marginally to detyrosinated microtubules. Phosphorylated. Phosphorylation induces conformational changes by increasing the affinity of the N-terminus for C-terminus, resulting in inhibition of its function thus decreasing its binding to microtubules and DCTN1. Exhibits a folded, autoinhibited conformation when phosphorylated and an open conformation when dephosphorylated with increased binding affinity to microtubules and DCTN1. Phosphorylation regulates its recruitment to tyrosinated microtubules and the recruitment of vesicular cargo to microtubules in neurons. Phosphorylation by MTOR may positively regulate CLIP1 association with microtubules. As to expression, expressed in the testes (at protein level).

The protein localises to the cytoplasm. It localises to the cytoskeleton. It is found in the cytoplasmic vesicle membrane. Its subcellular location is the cell projection. The protein resides in the ruffle. Functionally, binds to the plus end of microtubules and regulates the dynamics of the microtubule cytoskeleton. Promotes microtubule growth and microtubule bundling. Links cytoplasmic vesicles to microtubules and thereby plays an important role in intracellular vesicle trafficking. Plays a role macropinocytosis and endosome trafficking. In Mus musculus (Mouse), this protein is CAP-Gly domain-containing linker protein 1 (Clip1).